The sequence spans 262 residues: Alpha-tubulin N-acetyltransferase 1 (262 aa).

Residues 1–177 (MQVDADLRPI…TNFVVFEELF (177 aa)) enclose the N-acetyltransferase domain. Acetyl-CoA is bound at residue 111-124 (FYVHFSCQRQGVGQ).

It belongs to the acetyltransferase ATAT1 family. Expressed solely in touch receptor neurons.

It catalyses the reaction L-lysyl-[alpha-tubulin] + acetyl-CoA = N(6)-acetyl-L-lysyl-[alpha-tubulin] + CoA + H(+). In terms of biological role, specifically acetylates 'Lys-40' in alpha-tubulin/mec-12 on the lumenal side of microtubules. Promotes microtubule destabilization and accelerates microtubule dynamics; this activity may be independent of acetylation activity. Acetylates alpha-tubulin with a slow enzymatic rate, due to a catalytic site that is not optimized for acetyl transfer. Enters the microtubule through each end and diffuses quickly throughout the lumen of microtubules. Acetylates only long/old microtubules because of its slow acetylation rate since it does not have time to act on dynamically unstable microtubules before the enzyme is released. Required for the maintenance of touch receptor neurons and possibly other type of neurons involved in locomotion. Regulates the number and localization of mitochondria in mechanosensory neurons. Plays a role in axonal transport. The protein is Alpha-tubulin N-acetyltransferase 1 of Caenorhabditis elegans.